We begin with the raw amino-acid sequence, 149 residues long: Ribonuclease H (149 aa).

In terms of domain architecture, RNase H type-1 spans 4–145; it reads QRGVVEAFTD…ADALANQGID (142 aa). Mg(2+) is bound by residues Asp-13, Glu-51, Asp-73, and Asp-137.

This sequence belongs to the RNase H family. As to quaternary structure, monomer. The cofactor is Mg(2+).

The protein resides in the cytoplasm. It carries out the reaction Endonucleolytic cleavage to 5'-phosphomonoester.. In terms of biological role, endonuclease that specifically degrades the RNA of RNA-DNA hybrids. The polypeptide is Ribonuclease H (Halorhodospira halophila (strain DSM 244 / SL1) (Ectothiorhodospira halophila (strain DSM 244 / SL1))).